A 567-amino-acid chain; its full sequence is Thiol:disulfide interchange protein DsbD (567 aa).

The N-terminal stretch at Met1–Ala19 is a signal peptide. 2 disulfides stabilise this stretch: Cys122–Cys128 and Cys185–Cys307. The next 8 membrane-spanning stretches (helical) occupy residues Leu166–Val186, Leu210–Val230, Tyr246–Phe266, Ile299–Ile319, Trp326–Val346, Trp360–Leu380, Ala387–Thr407, and Ile418–Ala438. Residues Gln435–Pro567 form the Thioredoxin domain. Cys482 and Cys485 form a disulfide bridge.

Belongs to the thioredoxin family. DsbD subfamily.

It localises to the cell inner membrane. The enzyme catalyses [protein]-dithiol + NAD(+) = [protein]-disulfide + NADH + H(+). It carries out the reaction [protein]-dithiol + NADP(+) = [protein]-disulfide + NADPH + H(+). In terms of biological role, required to facilitate the formation of correct disulfide bonds in some periplasmic proteins and for the assembly of the periplasmic c-type cytochromes. Acts by transferring electrons from cytoplasmic thioredoxin to the periplasm. This transfer involves a cascade of disulfide bond formation and reduction steps. In Salmonella choleraesuis (strain SC-B67), this protein is Thiol:disulfide interchange protein DsbD.